A 167-amino-acid chain; its full sequence is UTP pyrophosphatase (167 aa).

The catalysed reaction is UTP + H2O = UMP + diphosphate + H(+). Specifically catalyzes the hydrolysis of UTP to UMP and diphosphate in vitro, albeit at apparently slow rate. Shows no activity towards ATP, GTP, CTP, dTTP and ITP as substrates. This chain is UTP pyrophosphatase, found in Escherichia coli (strain K12).